The chain runs to 356 residues: Dihydroorotate dehydrogenase (quinone) (356 aa).

Residues 66–70 (AGFDK) and threonine 90 contribute to the FMN site. Lysine 70 contributes to the substrate binding site. 115-119 (NRMGF) is a binding site for substrate. Asparagine 143 and asparagine 176 together coordinate FMN. Asparagine 176 is a binding site for substrate. Serine 179 serves as the catalytic Nucleophile. Substrate is bound at residue asparagine 181. FMN-binding residues include lysine 212 and threonine 240. 241–242 (NT) is a binding site for substrate. FMN contacts are provided by residues glycine 266, glycine 295, and 316–317 (YT).

The protein belongs to the dihydroorotate dehydrogenase family. Type 2 subfamily. Monomer. Requires FMN as cofactor.

The protein resides in the cell membrane. It catalyses the reaction (S)-dihydroorotate + a quinone = orotate + a quinol. Its pathway is pyrimidine metabolism; UMP biosynthesis via de novo pathway; orotate from (S)-dihydroorotate (quinone route): step 1/1. Functionally, catalyzes the conversion of dihydroorotate to orotate with quinone as electron acceptor. This is Dihydroorotate dehydrogenase (quinone) from Rhodococcus opacus (strain B4).